The sequence spans 346 residues: F(420)H(2) dehydrogenase subunit F (346 aa).

4Fe-4S ferredoxin-type domains lie at 5 to 34 (IAEV…VKKA) and 46 to 76 (YEKG…ENEL). Residues Cys-14, Cys-17, Cys-20, Cys-24, Cys-55, Cys-58, Cys-61, and Cys-65 each coordinate [4Fe-4S] cluster.

As to quaternary structure, the FPO complex is composed of at least 13 different subunits. It depends on [4Fe-4S] cluster as a cofactor. Requires FAD as cofactor.

It is found in the membrane. The protein resides in the cytoplasm. The enzyme catalyses methanophenazine + reduced coenzyme F420-(gamma-L-Glu)(n) = dihydromethanophenazine + oxidized coenzyme F420-(gamma-L-Glu)(n) + H(+). It catalyses the reaction reduced coenzyme F420-(gamma-L-Glu)(n) + 2 oxidized [2Fe-2S]-[ferredoxin] = oxidized coenzyme F420-(gamma-L-Glu)(n) + 2 reduced [2Fe-2S]-[ferredoxin] + 3 H(+). Functionally, component of the F(420)H(2) dehydrogenase (FPO complex) which is part of the energy-conserving F(420)H(2):heterodisulfide oxidoreductase system. The membrane-bound electron transfer system of the complex plays an important role in the metabolism of methylotrophic methanogens when the organisms grow on methanol or methylamines. Catalyzes the oxidation of methanophenazine to dihydromethanophenazine. It shuttles electrons from F(420)H(2), via FAD and iron-sulfur (Fe-S) centers, to methanophenazine (an electron carrier in the membrane). It couples the redox reaction to proton translocation (for every two electrons transferred, two hydrogen ions are translocated across the cytoplasmic membrane), and thus conserves the redox energy in a proton gradient. It also catalyzes the oxidation of F(420)H(2) with quinones such as 2,3-dimethyl-1,4-naphthoquinone, 2-methyl-1,4-naphthoquinone and tetramethyl-p-benzoquinone. Might have a dual function, acting as an electron input module when connected to the membrane integral Fpo complex, or as a soluble single subunit, being involved in the reoxydation of reduced ferredoxin in the cytoplasm. This is F(420)H(2) dehydrogenase subunit F (fpoF) from Methanosarcina mazei (strain ATCC BAA-159 / DSM 3647 / Goe1 / Go1 / JCM 11833 / OCM 88) (Methanosarcina frisia).